The following is a 461-amino-acid chain: MTATDNARQVTIIGAGLAGTLVARLLARNGWQVNLFERRPDPRIETGARGRSINLALAERGAHALRLAGLEREVLAEAVMMRGRMVHVPGTPPNLQPYGRDDSEVIWSINRDRLNRILLDGAEAAGASIHFNLGLDSVDFARQRLTLSNVSGERLEKRFHLLIGADGCNSAVRQAMASVVDLGEHLETQPHGYKELQITPEASAQFNLEPNALHIWPHGDYMCIALPNLDRSFTVTLFLHHQSPAAQPASPCFAQLVDGHAARRFFQRQFPDLSPMLDSLEQDFEHHPTGKLATLRLTTWHVGGQAVLLGDAAHPMVPFHGQGMNCALEDAVALAEHLQSAADNASALAAFTAQRQPDALAIQAMALENYVEMSSKVASPTYLLERELGQIMAQRQPTRFIPRYSMVTFSRLPYAQAMARGQIQEQLLKFAVANHSDLTSINLDAVEHEVTRCLPPLSHLC.

FAD-binding positions include Leu17 to Ala18, Glu37 to Arg39, and Ala56. Residues Arg84 and Tyr98 each coordinate L-kynurenine. Residues Arg111, Leu135, Asp311, and Met324–Asn325 contribute to the FAD site. Residues Asn369 and Tyr404 each coordinate L-kynurenine.

It belongs to the aromatic-ring hydroxylase family. KMO subfamily. It depends on FAD as a cofactor.

The catalysed reaction is L-kynurenine + NADPH + O2 + H(+) = 3-hydroxy-L-kynurenine + NADP(+) + H2O. Its pathway is cofactor biosynthesis; NAD(+) biosynthesis; quinolinate from L-kynurenine: step 1/3. It functions in the pathway siderophore biosynthesis; quinolobactin biosynthesis. Catalyzes the hydroxylation of L-kynurenine (L-Kyn) to form 3-hydroxy-L-kynurenine (L-3OHKyn). Probably required for the synthesis of quinolinic acid and the siderophore quinolobactin. The protein is Kynurenine 3-monooxygenase of Pseudomonas fluorescens.